The chain runs to 194 residues: ATP-dependent Clp protease proteolytic subunit (194 aa).

Catalysis depends on serine 99, which acts as the Nucleophile. Histidine 124 is an active-site residue.

The protein belongs to the peptidase S14 family. In terms of assembly, fourteen ClpP subunits assemble into 2 heptameric rings which stack back to back to give a disk-like structure with a central cavity, resembling the structure of eukaryotic proteasomes.

The protein resides in the cytoplasm. The enzyme catalyses Hydrolysis of proteins to small peptides in the presence of ATP and magnesium. alpha-casein is the usual test substrate. In the absence of ATP, only oligopeptides shorter than five residues are hydrolyzed (such as succinyl-Leu-Tyr-|-NHMec, and Leu-Tyr-Leu-|-Tyr-Trp, in which cleavage of the -Tyr-|-Leu- and -Tyr-|-Trp bonds also occurs).. In terms of biological role, cleaves peptides in various proteins in a process that requires ATP hydrolysis. Has a chymotrypsin-like activity. Plays a major role in the degradation of misfolded proteins. This is ATP-dependent Clp protease proteolytic subunit from Clostridium perfringens (strain ATCC 13124 / DSM 756 / JCM 1290 / NCIMB 6125 / NCTC 8237 / Type A).